The primary structure comprises 954 residues: Glycine dehydrogenase (decarboxylating) (954 aa).

Residue Lys-704 is modified to N6-(pyridoxal phosphate)lysine.

This sequence belongs to the GcvP family. As to quaternary structure, the glycine cleavage system is composed of four proteins: P, T, L and H. Pyridoxal 5'-phosphate serves as cofactor.

The enzyme catalyses N(6)-[(R)-lipoyl]-L-lysyl-[glycine-cleavage complex H protein] + glycine + H(+) = N(6)-[(R)-S(8)-aminomethyldihydrolipoyl]-L-lysyl-[glycine-cleavage complex H protein] + CO2. The glycine cleavage system catalyzes the degradation of glycine. The P protein binds the alpha-amino group of glycine through its pyridoxal phosphate cofactor; CO(2) is released and the remaining methylamine moiety is then transferred to the lipoamide cofactor of the H protein. The chain is Glycine dehydrogenase (decarboxylating) from Sinorhizobium medicae (strain WSM419) (Ensifer medicae).